We begin with the raw amino-acid sequence, 466 residues long: MSIASVASVFKGDFAVGSQVTVRGWVRTRRDSKAGISFLAVYDGSCFDPIQGVVPNSLDNYNDEILRLTAGCSVVMTGELVESPGKGQAFEMQVTKVEVTGWVEDPDTYPMAAKRHSIEHLRELAHLRPRTNIIGAVARVRNCLSHAIHNFYNEEGFIWVSTPLITASDCEGAGEMFRVSTLDLENLPRTDDGKVDFSEDFFGKESFLTVSGQLNGETYACALSKIYTFGPTFRAENSNTSRHLAEFWMVEPEVAFADLNDVAGLAERMLKYCFRAVLNERRDDLEFFAQRVDKTVIERLESFVNSDFAQVDYTDAIEILKSCGKKFEFDVEWGIDLQSEHERYLAEEHFKAPVVVKNYPKDIKAFYMRLNEDGKTVAAMDVLAPGIGEIIGGAQREERLDVLDTRLDEMGLSKEDYWWYRDLRRYGTVPHSGFGLGFERLVSYVTGVSNIRDVIPFPRAPKSANF.

The protein belongs to the class-II aminoacyl-tRNA synthetase family. In terms of assembly, homodimer.

It is found in the cytoplasm. The catalysed reaction is tRNA(Asn) + L-asparagine + ATP = L-asparaginyl-tRNA(Asn) + AMP + diphosphate + H(+). The polypeptide is Asparagine--tRNA ligase (Shewanella loihica (strain ATCC BAA-1088 / PV-4)).